A 534-amino-acid chain; its full sequence is MKKKIVHPIVLAILDGWGHTNIQQGNAIKIAKTPTIDSLIQAYPSTLLAASGQEVGLPKGQMGNSEVGHTTIGGGRVIQQELVKIGNSIVDNSFFNNLELNEACEYANNNKASLHLIGLCSNGGVHSHIDHLLALIDLADSKQVTNLYLHLITDGRDTSSNSAKYFIKIVADHIEHKQFATISTISGRYYAMDRDFRWSRTQAAYNILTSNNSIKLNASVNYGDLIDHYYNKGISDEFIPPSRINLGSIKDNDAIVFFNFRPDRMRQIVQAFVQKPFNCFATKPLYNLRVVTFTNYDTSLNTTIAFHPHILNNFLGEVLYKYGLKQFRVSETEKYAHVTYFFNGGAEEPFPGEDRELVSSPDVTTYDLSPDMSAELVTQKSISAIKKAIYSCIVINYANADMLGHTGKLKETIQSIETVDRCITELLDAVSKLNGTLIITADHGNAECMFTDEGNPCTAHTTNLVPLILIEGEQEAISGHGGQVKLRNNGSLADIAPTILDILHLKKPPEMTGKSLIINSRYETRNIEKTSIEL.

Residues Asp-15 and Ser-65 each contribute to the Mn(2+) site. Ser-65 serves as the catalytic Phosphoserine intermediate. Substrate-binding positions include His-126, 156–157, Arg-188, Arg-194, 261–264, and Lys-334; these read RD and RPDR. Residues Asp-401, His-405, Asp-442, His-443, and His-460 each contribute to the Mn(2+) site.

It belongs to the BPG-independent phosphoglycerate mutase family. The cofactor is Mn(2+).

The protein resides in the plastid. It is found in the chloroplast. It carries out the reaction (2R)-2-phosphoglycerate = (2R)-3-phosphoglycerate. It participates in carbohydrate degradation; glycolysis; pyruvate from D-glyceraldehyde 3-phosphate: step 3/5. Its function is as follows. Catalyzes the interconversion of 2-phosphoglycerate and 3-phosphoglycerate. This Pyropia yezoensis (Susabi-nori) protein is 2,3-bisphosphoglycerate-independent phosphoglycerate mutase.